An 81-amino-acid chain; its full sequence is MDSYLTTPMPYHPVAVMQNLEEKMQYYLVKTYTSLGKLAYNYPVLTMLGLAMSYKLGPRKVLLTVLQGFMTLGIANWLSWE.

This is an uncharacterized protein from Homo sapiens (Human).